Here is a 216-residue protein sequence, read N- to C-terminus: Thymidylate kinase (216 aa).

ATP is bound at residue 10–17 (GVDGSGKT).

This sequence belongs to the thymidylate kinase family.

The enzyme catalyses dTMP + ATP = dTDP + ADP. Its function is as follows. Phosphorylation of dTMP to form dTDP in both de novo and salvage pathways of dTTP synthesis. This Pelotomaculum thermopropionicum (strain DSM 13744 / JCM 10971 / SI) protein is Thymidylate kinase.